A 404-amino-acid chain; its full sequence is Cysteine desulfurase IscS (404 aa).

Residues 75 to 76 (AT), N155, Q183, and 203 to 205 (SSH) contribute to the pyridoxal 5'-phosphate site. Residue K206 is modified to N6-(pyridoxal phosphate)lysine. T243 is a binding site for pyridoxal 5'-phosphate. Residue C328 is the Cysteine persulfide intermediate of the active site. C328 lines the [2Fe-2S] cluster pocket.

It belongs to the class-V pyridoxal-phosphate-dependent aminotransferase family. NifS/IscS subfamily. In terms of assembly, homodimer. Forms a heterotetramer with IscU, interacts with other sulfur acceptors. The cofactor is pyridoxal 5'-phosphate.

The protein resides in the cytoplasm. The enzyme catalyses (sulfur carrier)-H + L-cysteine = (sulfur carrier)-SH + L-alanine. It participates in cofactor biosynthesis; iron-sulfur cluster biosynthesis. Functionally, master enzyme that delivers sulfur to a number of partners involved in Fe-S cluster assembly, tRNA modification or cofactor biosynthesis. Catalyzes the removal of elemental sulfur atoms from cysteine to produce alanine. Functions as a sulfur delivery protein for Fe-S cluster synthesis onto IscU, an Fe-S scaffold assembly protein, as well as other S acceptor proteins. This Histophilus somni (strain 129Pt) (Haemophilus somnus) protein is Cysteine desulfurase IscS.